The sequence spans 460 residues: tRNA modification GTPase MnmE (460 aa).

Positions 29, 91, and 132 each coordinate (6S)-5-formyl-5,6,7,8-tetrahydrofolate. Residues 227 to 383 (GISIALIGKT…LIDTIIKKCG (157 aa)) enclose the TrmE-type G domain. Asparagine 237 contacts K(+). Residues 237–242 (NVGKSS), 256–262 (TNIPGTT), and 281–284 (DTAG) contribute to the GTP site. Position 241 (serine 241) interacts with Mg(2+). K(+) is bound by residues threonine 256, isoleucine 258, and threonine 261. Threonine 262 serves as a coordination point for Mg(2+). Lysine 460 is a binding site for (6S)-5-formyl-5,6,7,8-tetrahydrofolate.

Belongs to the TRAFAC class TrmE-Era-EngA-EngB-Septin-like GTPase superfamily. TrmE GTPase family. Homodimer. Heterotetramer of two MnmE and two MnmG subunits. Requires K(+) as cofactor.

It localises to the cytoplasm. In terms of biological role, exhibits a very high intrinsic GTPase hydrolysis rate. Involved in the addition of a carboxymethylaminomethyl (cmnm) group at the wobble position (U34) of certain tRNAs, forming tRNA-cmnm(5)s(2)U34. This Prochlorococcus marinus (strain MIT 9312) protein is tRNA modification GTPase MnmE.